A 120-amino-acid polypeptide reads, in one-letter code: UPF0231 protein YacL (120 aa).

It belongs to the UPF0231 family.

This is UPF0231 protein YacL from Escherichia coli O6:K15:H31 (strain 536 / UPEC).